A 760-amino-acid polypeptide reads, in one-letter code: Phosphoribosylformylglycinamidine synthase subunit PurL (760 aa).

The disordered stretch occupies residues 1–25 (MNMSLPADRDTAKKPSAQKPSAHAQ). The active site involves His69. Positions 72 and 115 each coordinate ATP. Residue Glu117 participates in Mg(2+) binding. Substrate contacts are provided by residues 118-121 (SHNH) and Arg140. His119 functions as the Proton acceptor in the catalytic mechanism. Asp141 lines the Mg(2+) pocket. Position 265 (Gln265) interacts with substrate. Asp293 contributes to the Mg(2+) binding site. Position 337–339 (337–339 (ESQ)) interacts with substrate. 2 residues coordinate ATP: Asn519 and Gly556. Residue Asn557 coordinates Mg(2+). Substrate is bound at residue Ser559.

Belongs to the FGAMS family. As to quaternary structure, monomer. Part of the FGAM synthase complex composed of 1 PurL, 1 PurQ and 2 PurS subunits.

The protein localises to the cytoplasm. It catalyses the reaction N(2)-formyl-N(1)-(5-phospho-beta-D-ribosyl)glycinamide + L-glutamine + ATP + H2O = 2-formamido-N(1)-(5-O-phospho-beta-D-ribosyl)acetamidine + L-glutamate + ADP + phosphate + H(+). Its pathway is purine metabolism; IMP biosynthesis via de novo pathway; 5-amino-1-(5-phospho-D-ribosyl)imidazole from N(2)-formyl-N(1)-(5-phospho-D-ribosyl)glycinamide: step 1/2. In terms of biological role, part of the phosphoribosylformylglycinamidine synthase complex involved in the purines biosynthetic pathway. Catalyzes the ATP-dependent conversion of formylglycinamide ribonucleotide (FGAR) and glutamine to yield formylglycinamidine ribonucleotide (FGAM) and glutamate. The FGAM synthase complex is composed of three subunits. PurQ produces an ammonia molecule by converting glutamine to glutamate. PurL transfers the ammonia molecule to FGAR to form FGAM in an ATP-dependent manner. PurS interacts with PurQ and PurL and is thought to assist in the transfer of the ammonia molecule from PurQ to PurL. The protein is Phosphoribosylformylglycinamidine synthase subunit PurL of Tropheryma whipplei (strain TW08/27) (Whipple's bacillus).